The sequence spans 167 residues: NAD(P)H-quinone oxidoreductase subunit I, chloroplastic (167 aa).

4Fe-4S ferredoxin-type domains lie at 55 to 84 (GRIH…VDWK) and 95 to 124 (LNYS…MTEE). Positions 64, 67, 70, 74, 104, 107, 110, and 114 each coordinate [4Fe-4S] cluster.

The protein belongs to the complex I 23 kDa subunit family. NDH is composed of at least 16 different subunits, 5 of which are encoded in the nucleus. It depends on [4Fe-4S] cluster as a cofactor.

It localises to the plastid. The protein resides in the chloroplast thylakoid membrane. It catalyses the reaction a plastoquinone + NADH + (n+1) H(+)(in) = a plastoquinol + NAD(+) + n H(+)(out). It carries out the reaction a plastoquinone + NADPH + (n+1) H(+)(in) = a plastoquinol + NADP(+) + n H(+)(out). NDH shuttles electrons from NAD(P)H:plastoquinone, via FMN and iron-sulfur (Fe-S) centers, to quinones in the photosynthetic chain and possibly in a chloroplast respiratory chain. The immediate electron acceptor for the enzyme in this species is believed to be plastoquinone. Couples the redox reaction to proton translocation, and thus conserves the redox energy in a proton gradient. This Lobularia maritima (Sweet alyssum) protein is NAD(P)H-quinone oxidoreductase subunit I, chloroplastic.